A 353-amino-acid polypeptide reads, in one-letter code: AA9 family lytic polysaccharide monooxygenase A (353 aa).

The N-terminal stretch at 1 to 19 (MKSTFGLLALAAAAKMAHA) is a signal peptide. Cu(2+) is bound by residues histidine 20 and histidine 102. An intrachain disulfide couples cysteine 62 to cysteine 183. An O2-binding site is contributed by histidine 169. Tyrosine 180 contributes to the Cu(2+) binding site. Positions 266-276 (KPTTTTAAAPA) are enriched in low complexity. The tract at residues 266-316 (KPTTTTAAAPAETDSCDGDDDDYETETPAPQASATQAPAPQRPAPQTPSGS) is disordered. The span at 279–290 (DSCDGDDDDYET) shows a compositional bias: acidic residues. Positions 291–304 (ETPAPQASATQAPA) are enriched in low complexity. Residues 315–351 (GSVKEWYQCGGINYTGAKNCESGLVCKEWNPYYHQCI) form the CBM1 domain. Asparagine 327 carries an N-linked (GlcNAc...) asparagine glycan.

It belongs to the polysaccharide monooxygenase AA9 family. Cu(2+) serves as cofactor.

The protein resides in the secreted. It catalyses the reaction [(1-&gt;4)-beta-D-glucosyl]n+m + reduced acceptor + O2 = 4-dehydro-beta-D-glucosyl-[(1-&gt;4)-beta-D-glucosyl]n-1 + [(1-&gt;4)-beta-D-glucosyl]m + acceptor + H2O.. Lytic polysaccharide monooxygenase (LPMO) that depolymerizes crystalline and amorphous polysaccharides via the oxidation of scissile alpha- or beta-(1-4)-glycosidic bonds, yielding C4 oxidation products. Catalysis by LPMOs requires the reduction of the active-site copper from Cu(II) to Cu(I) by a reducing agent and H(2)O(2) or O(2) as a cosubstrate. The chain is AA9 family lytic polysaccharide monooxygenase A (eglD) from Aspergillus clavatus (strain ATCC 1007 / CBS 513.65 / DSM 816 / NCTC 3887 / NRRL 1 / QM 1276 / 107).